We begin with the raw amino-acid sequence, 337 residues long: ERI1 exoribonuclease 3 (337 aa).

The region spanning 146–320 (FLVLDFEATC…DDCKNIANIM (175 aa)) is the Exonuclease domain. 3 residues coordinate Mg(2+): Asp150, Glu152, and Asp249. Glu152 (proton acceptor) is an active-site residue. Glu152 is an AMP binding site. The active-site Proton acceptor is the His307. AMP is bound at residue His307. Asp312 is a binding site for Mg(2+).

In terms of assembly, interacts with PRNP. Mg(2+) is required as a cofactor.

The polypeptide is ERI1 exoribonuclease 3 (ERI3) (Homo sapiens (Human)).